A 362-amino-acid chain; its full sequence is 3-dehydroquinate synthase (362 aa).

Residues 74-79 (DGEGYK), 108-112 (GVIGD), 132-133 (TT), K145, K154, and 172-175 (TLDT) contribute to the NAD(+) site. Residues E187, H250, and H267 each coordinate Zn(2+).

This sequence belongs to the sugar phosphate cyclases superfamily. Dehydroquinate synthase family. Co(2+) is required as a cofactor. The cofactor is Zn(2+). Requires NAD(+) as cofactor.

It is found in the cytoplasm. It carries out the reaction 7-phospho-2-dehydro-3-deoxy-D-arabino-heptonate = 3-dehydroquinate + phosphate. It participates in metabolic intermediate biosynthesis; chorismate biosynthesis; chorismate from D-erythrose 4-phosphate and phosphoenolpyruvate: step 2/7. Catalyzes the conversion of 3-deoxy-D-arabino-heptulosonate 7-phosphate (DAHP) to dehydroquinate (DHQ). This Citrifermentans bemidjiense (strain ATCC BAA-1014 / DSM 16622 / JCM 12645 / Bem) (Geobacter bemidjiensis) protein is 3-dehydroquinate synthase.